Reading from the N-terminus, the 500-residue chain is Glycerol kinase (500 aa).

Residue Thr-11 coordinates ADP. 3 residues coordinate ATP: Thr-11, Thr-12, and Ser-13. Thr-11 is a binding site for sn-glycerol 3-phosphate. Arg-15 provides a ligand contact to ADP. Sn-glycerol 3-phosphate is bound by residues Arg-81, Glu-82, Tyr-133, and Asp-242. Residues Arg-81, Glu-82, Tyr-133, Asp-242, and Gln-243 each contribute to the glycerol site. ADP-binding residues include Thr-264 and Gly-307. Residues Thr-264, Gly-307, Gln-311, and Gly-411 each coordinate ATP. Gly-411 serves as a coordination point for ADP.

The protein belongs to the FGGY kinase family.

The catalysed reaction is glycerol + ATP = sn-glycerol 3-phosphate + ADP + H(+). Its pathway is polyol metabolism; glycerol degradation via glycerol kinase pathway; sn-glycerol 3-phosphate from glycerol: step 1/1. Its activity is regulated as follows. Inhibited by fructose 1,6-bisphosphate (FBP). Its function is as follows. Key enzyme in the regulation of glycerol uptake and metabolism. Catalyzes the phosphorylation of glycerol to yield sn-glycerol 3-phosphate. The sequence is that of Glycerol kinase from Bradyrhizobium sp. (strain BTAi1 / ATCC BAA-1182).